The primary structure comprises 82 residues: Small ribosomal subunit protein uS15 (82 aa).

This sequence belongs to the universal ribosomal protein uS15 family. In terms of assembly, part of the 30S ribosomal subunit. Forms a bridge to the 50S subunit in the 70S ribosome, contacting the 23S rRNA.

One of the primary rRNA binding proteins, it binds directly to 16S rRNA where it helps nucleate assembly of the platform of the 30S subunit by binding and bridging several RNA helices of the 16S rRNA. In terms of biological role, forms an intersubunit bridge (bridge B4) with the 23S rRNA of the 50S subunit in the ribosome. The sequence is that of Small ribosomal subunit protein uS15 from Pelagibacter ubique (strain HTCC1062).